A 225-amino-acid polypeptide reads, in one-letter code: Ribonuclease 3 (225 aa).

In terms of domain architecture, RNase III spans 5-127 (VTELYKTIDY…IIGAVFLDSD (123 aa)). A Mg(2+)-binding site is contributed by glutamate 40. Aspartate 44 is a catalytic residue. Aspartate 113 and glutamate 116 together coordinate Mg(2+). Glutamate 116 is an active-site residue. The DRBM domain maps to 154–223 (DPKTLLQEHL…AEKALKILKN (70 aa)).

Belongs to the ribonuclease III family. In terms of assembly, homodimer. Mg(2+) serves as cofactor.

The protein localises to the cytoplasm. The enzyme catalyses Endonucleolytic cleavage to 5'-phosphomonoester.. Functionally, digests double-stranded RNA. Involved in the processing of primary rRNA transcript to yield the immediate precursors to the large and small rRNAs (23S and 16S). Processes some mRNAs, and tRNAs when they are encoded in the rRNA operon. Processes pre-crRNA and tracrRNA of type II CRISPR loci if present in the organism. In Pseudoalteromonas translucida (strain TAC 125), this protein is Ribonuclease 3.